The following is a 560-amino-acid chain: Leucine-rich repeat and IQ domain-containing protein 4 (560 aa).

The tract at residues 1–20 is disordered; that stretch reads MSKDIKSVEHSPKIHQRNDP. LRR repeat units lie at residues 23 to 47, 48 to 70, 72 to 95, 97 to 116, 117 to 140, 141 to 164, 166 to 187, 188 to 210, 212 to 233, 234 to 256, 258 to 281, 283 to 301, 302 to 325, 326 to 348, 350 to 371, 374 to 397, 398 to 422, 424 to 443, 444 to 466, and 468 to 489; these read VNDR…IFTF, TELE…IQRL, NIRV…LLSS, ESLD…VVSF, LHAL…IFKN, LHHL…IVNQ, KLRE…LCVL, YTLE…IGHL, GLQK…LCQC, SQLS…FAEL, KMTE…RWTS, HLLY…SFRC, LVNL…ICAL, KNLE…LGSL, KLKI…VLSL, LEKL…IRKL, QSLK…SMPN, EVLD…ICQA, QALK…LDSL, and NLKV…VCAE. The region spanning 504–533 is the IQ domain; sequence RNIMATKIQAWWRGTMVQRGFGKFGELLKP. Residues 529-560 are disordered; that stretch reads ELLKPQKKGKTSPKDKKGKKDVKGKPGKGKKK. The span at 533–560 shows a compositional bias: basic residues; sequence PQKKGKTSPKDKKGKKDVKGKPGKGKKK.

The protein is Leucine-rich repeat and IQ domain-containing protein 4 (LRRIQ4) of Homo sapiens (Human).